Consider the following 729-residue polypeptide: Sodium-dependent neutral amino acid transporter B(0)AT2 (729 aa).

The Cytoplasmic segment spans residues 1 to 69 (MPKNSKVVKR…ERPAWNSKLQ (69 aa)). Phosphoserine occurs at positions 25 and 55. Transmembrane regions (helical) follow at residues 70-90 (YILA…FPYL), 98-117 (AYLL…LFFL), and 142-162 (GIGF…NVII). The Extracellular segment spans residues 163 to 225 (GWTLFYFSQS…SSISESGGLN (63 aa)). N-linked (GlcNAc...) asparagine glycosylation is present at asparagine 187. The next 4 helical transmembrane spans lie at 226–244 (WKMT…LAMI), 253–270 (IMYF…CFLI), 306–323 (VFFA…FSSY), and 335–356 (VLVS…FAVL). At 357–452 (GFKANIVNEK…FIAFTEAMTH (96 aa)) the chain is on the extracellular side. Residues asparagine 383 and asparagine 394 are each glycosylated (N-linked (GlcNAc...) asparagine). Helical transmembrane passes span 453–472 (FPAS…NLGL), 496–514 (ILTV…MFVQ), 530–550 (TLPL…VYGI), 571–592 (YMWK…IVNM), and 620–642 (VVCF…IRRC). At 643 to 729 (NLIDDSSGNL…DMPDMPESDL (87 aa)) the chain is on the cytoplasmic side. Phosphoserine is present on residues serine 687, serine 699, and serine 701.

Belongs to the sodium:neurotransmitter symporter (SNF) (TC 2.A.22) family. SLC6A15 subfamily. As to expression, widely distributed in the central nervous system, including the olfactory bulb, the hypothalamus, the cerebral cortex, the hippocampus, and the cerebellum. In addition, intense expression is found in the motor nuclei including the oculomotor nucleus, abducens nucleus, trigeminal motor nucleus, facial nucleus, hypoglossal nucleus and ventral horn of spinal cord. Intense hybridization signals are also observed in the nuclei containing monoaminergic neurons, such as locus coeruleus, the substantia nigra pars compacta, the ventral tegmental area, the dorsal raphe nucleus and the median raphe nucleus.

The protein resides in the membrane. The catalysed reaction is L-leucine(in) + Na(+)(in) = L-leucine(out) + Na(+)(out). It carries out the reaction L-isoleucine(in) + Na(+)(in) = L-isoleucine(out) + Na(+)(out). It catalyses the reaction L-methionine(in) + Na(+)(in) = L-methionine(out) + Na(+)(out). The enzyme catalyses L-proline(in) + Na(+)(in) = L-proline(out) + Na(+)(out). The catalysed reaction is L-alanine(in) + Na(+)(in) = L-alanine(out) + Na(+)(out). It carries out the reaction L-asparagine(in) + Na(+)(in) = L-asparagine(out) + Na(+)(out). It catalyses the reaction L-valine(in) + Na(+)(in) = L-valine(out) + Na(+)(out). The enzyme catalyses L-cysteine(in) + Na(+)(in) = L-cysteine(out) + Na(+)(out). The catalysed reaction is L-glutamine(in) + Na(+)(in) = L-glutamine(out) + Na(+)(out). It carries out the reaction L-serine(in) + Na(+)(in) = L-serine(out) + Na(+)(out). It catalyses the reaction L-threonine(in) + Na(+)(in) = L-threonine(out) + Na(+)(out). The enzyme catalyses L-pipecolate(in) + Na(+)(in) = L-pipecolate(out) + Na(+)(out). The catalysed reaction is L-phenylalanine(in) + Na(+)(in) = L-phenylalanine(out) + Na(+)(out). Functions as a sodium-dependent neutral amino acid transporter. Exhibits preference for the branched-chain amino acids, particularly leucine, valine and isoleucine and methionine. Can also transport low-affinity substrates such as alanine, phenylalanine, glutamine and pipecolic acid. Mediates the saturable, pH-sensitive and electrogenic cotransport of proline and sodium ions with a stoichiometry of 1:1. May have a role as transporter for neurotransmitter precursors into neurons. In contrast to other members of the neurotransmitter transporter family, does not appear to be chloride-dependent. This Rattus norvegicus (Rat) protein is Sodium-dependent neutral amino acid transporter B(0)AT2 (Slc6a15).